Here is a 332-residue protein sequence, read N- to C-terminus: DNA-directed RNA polymerase subunit alpha (332 aa).

Positions 1–226 (MLIAQRPTLT…ELFGLARELN (226 aa)) are alpha N-terminal domain (alpha-NTD). The alpha C-terminal domain (alpha-CTD) stretch occupies residues 243–332 (LSSELSMPIE…GYDEDESTTI (90 aa)).

Belongs to the RNA polymerase alpha chain family. In terms of assembly, homodimer. The RNAP catalytic core consists of 2 alpha, 1 beta, 1 beta' and 1 omega subunit. When a sigma factor is associated with the core the holoenzyme is formed, which can initiate transcription.

It catalyses the reaction RNA(n) + a ribonucleoside 5'-triphosphate = RNA(n+1) + diphosphate. In terms of biological role, DNA-dependent RNA polymerase catalyzes the transcription of DNA into RNA using the four ribonucleoside triphosphates as substrates. In Leifsonia xyli subsp. xyli (strain CTCB07), this protein is DNA-directed RNA polymerase subunit alpha.